Here is a 387-residue protein sequence, read N- to C-terminus: Ferrochelatase (387 aa).

Positions 196 and 277 each coordinate Fe cation.

Belongs to the ferrochelatase family.

It is found in the cytoplasm. It catalyses the reaction heme b + 2 H(+) = protoporphyrin IX + Fe(2+). It participates in porphyrin-containing compound metabolism; protoheme biosynthesis; protoheme from protoporphyrin-IX: step 1/1. In terms of biological role, catalyzes the ferrous insertion into protoporphyrin IX. This is Ferrochelatase from Gloeothece citriformis (strain PCC 7424) (Cyanothece sp. (strain PCC 7424)).